The chain runs to 341 residues: tRNA N6-adenosine threonylcarbamoyltransferase (341 aa).

Residues histidine 111 and histidine 115 each coordinate Fe cation. Residues 133–137 (AVSGG), aspartate 166, glycine 179, aspartate 183, and asparagine 273 each bind substrate. Residue aspartate 301 coordinates Fe cation.

This sequence belongs to the KAE1 / TsaD family. Requires Fe(2+) as cofactor.

The protein resides in the cytoplasm. It catalyses the reaction L-threonylcarbamoyladenylate + adenosine(37) in tRNA = N(6)-L-threonylcarbamoyladenosine(37) in tRNA + AMP + H(+). Required for the formation of a threonylcarbamoyl group on adenosine at position 37 (t(6)A37) in tRNAs that read codons beginning with adenine. Is involved in the transfer of the threonylcarbamoyl moiety of threonylcarbamoyl-AMP (TC-AMP) to the N6 group of A37, together with TsaE and TsaB. TsaD likely plays a direct catalytic role in this reaction. This chain is tRNA N6-adenosine threonylcarbamoyltransferase, found in Geotalea daltonii (strain DSM 22248 / JCM 15807 / FRC-32) (Geobacter daltonii).